Here is an 823-residue protein sequence, read N- to C-terminus: Dolichyl-diphosphooligosaccharide--protein glycosyltransferase subunit STT3B (823 aa).

Positions 1–58 (MAEPSAPESKHKSSLNSSPWSGLMALGNSRHGHHGPGTQSASSAAAPKPGPPAGLSGG) are disordered. The residue at position 2 (Ala-2) is an N-acetylalanine. Over 2 to 41 (AEPSAPESKHKSSLNSSPWSGLMALGNSRHGHHGPGTQSA) the chain is Cytoplasmic. Ser-13, Ser-18, and Ser-29 each carry phosphoserine. Residues 42–83 (SSAAAPKPGPPAGLSGGLSQPAGWQSLLSFTILFLAWLAGFS) form a helical membrane-spanning segment. At 84–170 (SRLFAVIRFE…VHIRDVCVFL (87 aa)) the chain is on the lumenal side. A DXD motif 1 motif is present at residues 98-100 (EFD). Asp-100 lines the Mn(2+) pocket. The chain crosses the membrane as a helical span at residues 171-189 (APTFSGLTSISTFLLTREL). Topologically, residues 190–191 (WN) are cytoplasmic. A helical transmembrane segment spans residues 192 to 209 (QGAGLLAACFIAIVPGYI). At 210 to 220 (SRSVAGSFDNE) the chain is on the lumenal side. The Mn(2+) site is built by Asp-218 and Glu-220. The short motif at 218–220 (DNE) is the DXD motif 2 element. Residues 221 to 240 (GIAIFALQFTYYLWVKSVKT) form a helical membrane-spanning segment. The Cytoplasmic portion of the chain corresponds to 241-242 (GS). A helical membrane pass occupies residues 243–257 (VFWTMCCCLSYFYMV). At 258 to 262 (SAWGG) the chain is on the lumenal side. The chain crosses the membrane as a helical span at residues 263–279 (YVFIINLIPLHVFVLLL). The Cytoplasmic segment spans residues 280–284 (MQRYS). The helical transmembrane segment at 285 to 310 (KRVYIAYSTFYIVGLILSMQIPFVGF) threads the bilayer. At 311 to 318 (QPIRTSEH) the chain is on the lumenal side. The chain crosses the membrane as a helical span at residues 319-338 (MAAAGVFALLQAYAFLQYLR). Residues 339-347 (DRLTKQEFQ) lie on the Cytoplasmic side of the membrane. Residues 348–368 (TLFFLGVSLAAGAVFLSVIYL) form a helical membrane-spanning segment. The Lumenal segment spans residues 369–407 (TYTGYIAPWSGRFYSLWDTGYAKIHIPIIASVSEHQPTT). The short motif at 399 to 402 (SVSE) is the SVSE motif element. A helical membrane pass occupies residues 408 to 430 (WVSFFFDLHILVCTFPAGLWFCI). The Cytoplasmic portion of the chain corresponds to 431–436 (KNINDE). A helical membrane pass occupies residues 437–453 (RVFVALYAISAVYFAGV). The Lumenal portion of the chain corresponds to 454-457 (MVRL). Arg-456 is a binding site for dolichyl diphosphooligosaccharide. A helical transmembrane segment spans residues 458 to 479 (MLTLTPVVCMLSAIAFSNVFEH). Residues 480-523 (YLGDDMKRENPPVEDSSDEDDKRNPGNLYDKAGKVRKHVTEQEK) are Cytoplasmic-facing. The interval 487-526 (RENPPVEDSSDEDDKRNPGNLYDKAGKVRKHVTEQEKPEE) is disordered. A phosphoserine mark is found at Ser-495 and Ser-496. Positions 517–526 (HVTEQEKPEE) are enriched in basic and acidic residues. Residues 524–549 (PEEGLGPNIKSIVTMLMLMLLMMFAV) form a helical membrane-spanning segment. At 550–823 (HCTWVTSNAY…KGKKTSKKTV (274 aa)) the chain is on the lumenal side. An interacts with target acceptor peptide in protein substrate region spans residues 601 to 603 (WWD). A WWDYG motif motif is present at residues 601-605 (WWDYG). Tyr-606 is a binding site for dolichyl diphosphooligosaccharide. 2 N-linked (GlcNAc...) asparagine glycosylation sites follow: Asn-613 and Asn-620. The N-linked (GlcNAc...) (high mannose) asparagine glycan is linked to Asn-624. A glycan (N-linked (GlcNAc...) asparagine) is linked at Asn-638. The short motif at 668-675 (DINKFLWM) is the DK motif element.

The protein belongs to the STT3 family. As to quaternary structure, component of the oligosaccharyltransferase (OST) complex. There are 2 OST complexes, OST-A and OST-B, which contain STT3A or STT3B as catalytic subunit, respectively. OST-A and OST-B contain common core subunits RPN1, RPN2, OST48, OST4, DAD1 and TMEM258, and OST-B contains either MAGT1 or TUSC3 as specific accessory subunit. Requires Mg(2+) as cofactor. Mn(2+) is required as a cofactor.

The protein resides in the endoplasmic reticulum membrane. The enzyme catalyses a di-trans,poly-cis-dolichyl diphosphooligosaccharide + L-asparaginyl-[protein] = N(4)-(oligosaccharide-(1-&gt;4)-N-acetyl-beta-D-glucosaminyl-(1-&gt;4)-N-acetyl-beta-D-glucosaminyl)-L-asparaginyl-[protein] + a di-trans,poly-cis-dolichyl diphosphate + H(+). Its pathway is protein modification; protein glycosylation. Catalytic subunit of the oligosaccharyl transferase (OST) complex that catalyzes the initial transfer of a defined glycan (Glc(3)Man(9)GlcNAc(2) in eukaryotes) from the lipid carrier dolichol-pyrophosphate to an asparagine residue within an Asn-X-Ser/Thr consensus motif in nascent polypeptide chains, the first step in protein N-glycosylation. N-glycosylation occurs cotranslationally and the complex associates with the Sec61 complex at the channel-forming translocon complex that mediates protein translocation across the endoplasmic reticulum (ER). All subunits are required for a maximal enzyme activity. This subunit contains the active site and the acceptor peptide and donor lipid-linked oligosaccharide (LLO) binding pockets. STT3B is present in a small subset of OST complexes and mediates both cotranslational and post-translational N-glycosylation of target proteins: STT3B-containing complexes are required for efficient post-translational glycosylation and while they are less competent than STT3A-containing complexes for cotranslational glycosylation, they have the ability to mediate glycosylation of some nascent sites that are not accessible for STT3A. STT3B-containing complexes also act post-translationally and mediate modification of skipped glycosylation sites in unfolded proteins. Plays a role in ER-associated degradation (ERAD) pathway that mediates ubiquitin-dependent degradation of misfolded endoplasmic reticulum proteins by mediating N-glycosylation of unfolded proteins, which are then recognized by the ERAD pathway and targeted for degradation. This Mus musculus (Mouse) protein is Dolichyl-diphosphooligosaccharide--protein glycosyltransferase subunit STT3B.